Here is a 393-residue protein sequence, read N- to C-terminus: MVTVEEVRKAQRAEGPATILAIGTATPANCVNQSTYPDYYFRITNSEHKTELKEKFQRMCDKSMITKRYMHLTEEILKENPSFCEYMAPSLDARQDIAVVEVPKLGKEAAQSAIKEWGQPKSKITHVVFCTTSGVDMPGADYQLTKLLGLRPSVKRLMMYQQGCFAGGTVLRLAKDLAENNKGARVLIVCSEITVVTFRGPSETHLDSLVGQALFGDGAAAVIVGADPTPAEKPLFQLVSAAQTLAPNSCGAIDGHLREVGLTFHLLKDVPSVVSNNIEKCLFEAFNPLGISDWNSVFWIAHPGGPAILDQVEDKLGLKPEKLRATRHVLSEYGNMSSACVLFILDEMRKASSNAGLGTTGEGLEWGVLFGFGPGLTIETVVLHSVLIKPGPH.

Residue Cys-164 is part of the active site.

It belongs to the thiolase-like superfamily. Chalcone/stilbene synthases family.

It carries out the reaction (E)-4-coumaroyl-CoA + 3 malonyl-CoA + 3 H(+) = 2',4,4',6'-tetrahydroxychalcone + 3 CO2 + 4 CoA. Its pathway is secondary metabolite biosynthesis; flavonoid biosynthesis. Its function is as follows. The primary product of this enzyme is 4,2',4',6'-tetrahydroxychalcone (also termed naringenin-chalcone or chalcone) which can under specific conditions spontaneously isomerize into naringenin. The polypeptide is Chalcone synthase DII (CHS-DII) (Ipomoea batatas (Sweet potato)).